Here is an 83-residue protein sequence, read N- to C-terminus: Defensin-2 (83 aa).

A signal peptide spans 1 to 33 (MAGKGVGTPLSALFLLVLLVVTIGMMEVQVAEG). 4 disulfide bridges follow: cysteine 36–cysteine 82, cysteine 47–cysteine 67, cysteine 53–cysteine 76, and cysteine 57–cysteine 78.

This sequence belongs to the DEFL family.

It is found in the secreted. Its function is as follows. Plant defense peptide. Has antifungal activity. In Pinus sylvestris (Scotch pine), this protein is Defensin-2.